We begin with the raw amino-acid sequence, 79 residues long: M-myrmicitoxin(01)-Tb1a (79 aa).

Residues 1 to 26 (MKLSFLSLVLAIILVMALMYTPHAEA) form the signal peptide. The propeptide occupies 27-56 (KAWADADADATAAADADADAVADALADAVA). At valine 76 the chain carries Valine amide.

The protein belongs to the formicidae venom precursor-01 superfamily. In terms of processing, the C-terminal amidation is important for antimicrobial activity, since a non-amidated synthetic peptide shows a reduced antimicrobial activity (2-20-fold depending on the strain tested). The amidation may play a positive role in the peptide conformation, since amidated peptide shows an increase of about 5% of helical content. In terms of tissue distribution, expressed by the venom gland.

The protein resides in the secreted. The protein localises to the target cell membrane. Its function is as follows. Antimicrobial peptide that shows antimicrobial activities against all microorganisms tested with minimal inhibitory concentrations (MICs) values ranging from 0.45 to 97.5 umol/L. This peptide kills the microorganisms by permeabilizating the membranes. It shows a very weak hemolytic activity (HC(50)=325 umol/L) and weak cytotoxicity against human lymphocytes (LC(50)=67.8 umol/L). Gram-negative bacteria tested are E.coli (MIC=24.4 umol/L), C.sakazakii (MIC=5.8 umol/L), P.aeruginosa (MIC=8.7-12.2 umol/L), S.enterica (MIC=5.4 umol/L), and H.pylori (MIC=0.99-3.9 umol/L). Gram-positive bacteria tested are E.hirae (MIC=12.2 umol/L), S.aureus (MIC=3.0-6.4 umol/L), methicillin-resistant S.aureus (MRSA) (MIC=8.7 umol/L), S.xylosus (MIC=0.45-1.3 umol/L), and B.subtilis (MIC=24.4 umol/L). Fungi tested are A.niger (MIC=0.75 umol/L), C.albicans (MIC=17.3 umol/L), G.candidum (MIC=97.5 umol/L), and S.cerevisiae (MIC=6.1 umol/L). Finally the parasite tested is L.infantum (MIC=1.5 umol/L). The protein is M-myrmicitoxin(01)-Tb1a of Tetramorium bicarinatum (Tramp ant).